Consider the following 177-residue polypeptide: Dihydrofolate reductase (177 aa).

The catalysed reaction is (6S)-5,6,7,8-tetrahydrofolate + NADP(+) = 7,8-dihydrofolate + NADPH + H(+). Functionally, provides the tetrahydrofolates necessary for the synthesis of nucleotides and amino acids. Bacteriophage T5 induces high levels of dihydrofolate reductase in the host cell, probably for the viral replication. The sequence is that of Dihydrofolate reductase from Escherichia phage T5 (Enterobacteria phage T5).